A 79-amino-acid polypeptide reads, in one-letter code: Small ribosomal subunit protein bS18 (79 aa).

The protein belongs to the bacterial ribosomal protein bS18 family. As to quaternary structure, part of the 30S ribosomal subunit. Forms a tight heterodimer with protein bS6.

In terms of biological role, binds as a heterodimer with protein bS6 to the central domain of the 16S rRNA, where it helps stabilize the platform of the 30S subunit. The sequence is that of Small ribosomal subunit protein bS18 from Bacillus velezensis (strain DSM 23117 / BGSC 10A6 / LMG 26770 / FZB42) (Bacillus amyloliquefaciens subsp. plantarum).